The chain runs to 164 residues: Phosphopantetheine adenylyltransferase (164 aa).

Substrate is bound at residue Ser-9. ATP contacts are provided by residues 9–10 and His-17; that span reads SF. Substrate-binding residues include Lys-41, Leu-73, and Arg-87. ATP is bound by residues 88–90, Glu-98, and 123–129; these read GLR and YTFLSSS.

The protein belongs to the bacterial CoaD family. As to quaternary structure, homohexamer. Mg(2+) is required as a cofactor.

The protein localises to the cytoplasm. The catalysed reaction is (R)-4'-phosphopantetheine + ATP + H(+) = 3'-dephospho-CoA + diphosphate. Its pathway is cofactor biosynthesis; coenzyme A biosynthesis; CoA from (R)-pantothenate: step 4/5. In terms of biological role, reversibly transfers an adenylyl group from ATP to 4'-phosphopantetheine, yielding dephospho-CoA (dPCoA) and pyrophosphate. In Dictyoglomus thermophilum (strain ATCC 35947 / DSM 3960 / H-6-12), this protein is Phosphopantetheine adenylyltransferase.